The primary structure comprises 1002 residues: Lon protease homolog, mitochondrial (1002 aa).

The Lon N-terminal domain occupies 102–313; that stretch reads VIALPLPHRP…LTLELVKKEM (212 aa). 468 to 475 provides a ligand contact to ATP; that stretch reads GPPGVGKT. The region spanning 811–995 is the Lon proteolytic domain; that stretch reads QTPVGVVMGL…NEIFDIAFQS (185 aa). Residues Ser-901 and Lys-944 contribute to the active site.

It belongs to the peptidase S16 family. As to quaternary structure, homohexamer or homoheptamer. Organized in a ring with a central cavity.

The protein localises to the mitochondrion matrix. The catalysed reaction is Hydrolysis of proteins in presence of ATP.. Its function is as follows. ATP-dependent serine protease that mediates the selective degradation of misfolded, unassembled or oxidatively damaged polypeptides as well as certain short-lived regulatory proteins in the mitochondrial matrix. May also have a chaperone function in the assembly of inner membrane protein complexes. Participates in the regulation of mitochondrial gene expression and in the maintenance of the integrity of the mitochondrial genome. Binds to mitochondrial DNA in a site-specific manner. The sequence is that of Lon protease homolog, mitochondrial from Oryza sativa subsp. indica (Rice).